A 193-amino-acid chain; its full sequence is dCTP deaminase, dUMP-forming (193 aa).

Residues lysine 101–arginine 106, aspartate 119, threonine 127–glutamate 129, glutamine 148, tyrosine 162, and glutamine 174 contribute to the dCTP site. The active-site Proton donor/acceptor is the glutamate 129. The interval threonine 160–aspartate 193 is disordered. Residues leucine 167 to proline 177 are compositionally biased toward polar residues.

Belongs to the dCTP deaminase family. In terms of assembly, homotrimer.

It catalyses the reaction dCTP + 2 H2O = dUMP + NH4(+) + diphosphate. Its pathway is pyrimidine metabolism; dUMP biosynthesis; dUMP from dCTP: step 1/1. Functionally, bifunctional enzyme that catalyzes both the deamination of dCTP to dUTP and the hydrolysis of dUTP to dUMP without releasing the toxic dUTP intermediate. The sequence is that of dCTP deaminase, dUMP-forming from Corynebacterium efficiens (strain DSM 44549 / YS-314 / AJ 12310 / JCM 11189 / NBRC 100395).